Here is a 315-residue protein sequence, read N- to C-terminus: Secreted frizzled-related protein 3 (315 aa).

An N-terminal signal peptide occupies residues 1-21 (MWRGLPALALAALLLLGRAPA). One can recognise an FZ domain in the interval 22–142 (GRAAACEPVR…LYDRGVCISP (121 aa)). Disulfide bonds link cysteine 27-cysteine 88, cysteine 35-cysteine 81, cysteine 72-cysteine 111, cysteine 100-cysteine 139, and cysteine 104-cysteine 128. A glycan (N-linked (GlcNAc...) asparagine) is linked at asparagine 41. Residues 170–290 (CKCKPIKATQ…WDQKLRHLGK (121 aa)) enclose the NTR domain. The interval 284 to 315 (KLRHLGKGKGEPGQSDSALKTGKPGNARQTRS) is disordered.

The protein belongs to the secreted frizzled-related protein (sFRP) family.

The protein localises to the secreted. Functionally, soluble frizzled-related proteins (sFRPS) function as modulators of Wnt signaling through direct interaction with Wnts. They have a role in regulating cell growth and differentiation in specific cell types. SFRP3/FRZB appears to be involved in limb skeletogenesis. Antagonist of Wnt8 signaling. Regulates chondrocyte maturation and long bone development. This is Secreted frizzled-related protein 3 (FRZB) from Gallus gallus (Chicken).